The chain runs to 267 residues: MSLRVLGSGTWPSAPKMFLLLTALQVLAIAMTQSQEDENKIIGGHTCTRSSQPWQAALLAGPRRRFLCGGALLSGQWVITAAHCGRPILQVALGKHNLRRWEATQQVLRVVRQVTHPNYNSRTHDNDLMLLQLQQPARIGRAVRPIEVTQACASPGTSCRVSGWGTISSPIARYPASLQCVNINISPDEVCQKAYPRTITPGMVCAGVPQGGKDSCQGDSGGPLVCRGQLQGLVSWGMERCALPGYPGVYTNLCKYRSWIEETMRDK.

An N-terminal signal peptide occupies residues 1-34 (MSLRVLGSGTWPSAPKMFLLLTALQVLAIAMTQS). A propeptide spans 35–40 (QEDENK) (activation peptide). Residues 41-265 (IIGGHTCTRS…YRSWIEETMR (225 aa)) enclose the Peptidase S1 domain. 5 cysteine pairs are disulfide-bonded: C47/C180, C68/C84, C159/C226, C191/C205, and C216/C241. Catalysis depends on charge relay system residues H83 and D127. The active-site Charge relay system is the S220.

The protein belongs to the peptidase S1 family. Kallikrein subfamily. Post-translationally, proteolytic cleavage of the activation peptide produces the active enzyme. As to expression, highly expressed in CNS, bone marrow and fetal liver. Also expressed in breast, thyroid, kidney, colon, pancreas, spleen, prostate, uterus, small intestine, placenta and skeletal muscle. Among 40 tissues tested, the highest expression is detected in skin followed by breast and prostate (at protein level). Expressed in stratum corneum by sweat ducts and sweat glands and detected in sweat (at protein level).

The protein resides in the secreted. It localises to the extracellular space. Inhibited by SERPINA1, SERPINC1, SERPINE1, SERPINF2, aprotinin, soybean, trypsin inhibitor and leupeptin. Inhibited by serine protease inhibitor SPINK5. Has an autoproteolytic activity which may have a regulatory effect. Activated by citrate and inhibited by zinc and to a lower extent by manganese. Serine-type endopeptidase with a dual trypsin-like and chymotrypsin-like substrate specificity. May activate/inactivate the proteinase-activated receptors F2R, F2RL1 and F2RL3 and other kallikreins including KLK1, KLK3, KLK5 and KLK11. May function in seminal clot liquefaction through direct cleavage of the semenogelin SEMG1 and SEMG2 and activation of KLK3. May function through desmoglein DSG1 cleavage in epidermal desquamation a process by which the most superficial corneocytes are shed from the skin surface. May be involved in several aspects of tumor progression including growth, invasion and angiogenesis. This is Kallikrein-14 (KLK14) from Homo sapiens (Human).